A 592-amino-acid chain; its full sequence is A-type ATP synthase subunit A (592 aa).

233–240 (GPFGSGKT) provides a ligand contact to ATP.

It belongs to the ATPase alpha/beta chains family. In terms of assembly, has multiple subunits with at least A(3), B(3), C, D, E, F, H, I and proteolipid K(x).

It is found in the cell membrane. The catalysed reaction is ATP + H2O + 4 H(+)(in) = ADP + phosphate + 5 H(+)(out). Its function is as follows. Component of the A-type ATP synthase that produces ATP from ADP in the presence of a proton gradient across the membrane. The A chain is the catalytic subunit. The chain is A-type ATP synthase subunit A from Saccharolobus islandicus (strain L.S.2.15 / Lassen #1) (Sulfolobus islandicus).